We begin with the raw amino-acid sequence, 245 residues long: 5-oxoprolinase subunit A (245 aa).

This sequence belongs to the LamB/PxpA family. As to quaternary structure, forms a complex composed of PxpA, PxpB and PxpC.

It catalyses the reaction 5-oxo-L-proline + ATP + 2 H2O = L-glutamate + ADP + phosphate + H(+). Functionally, catalyzes the cleavage of 5-oxoproline to form L-glutamate coupled to the hydrolysis of ATP to ADP and inorganic phosphate. In Yersinia pseudotuberculosis serotype O:1b (strain IP 31758), this protein is 5-oxoprolinase subunit A.